The following is a 496-amino-acid chain: Matrilin-1 (496 aa).

A signal peptide spans 1–22 (MRVLSGTSLMLCSLLLLLQALC). Residues 23–222 (SPGLAPQSRG…SRKFQEAFCV (200 aa)) form the VWFA 1 domain. The N-linked (GlcNAc...) asparagine glycan is linked to asparagine 76. The EGF-like domain occupies 223–263 (VSDLCATGDHDCEQVCISSPGSYTCACHEGFTLNSDGKTCN). 3 disulfide bridges follow: cysteine 227–cysteine 238, cysteine 234–cysteine 247, and cysteine 249–cysteine 262. The 190-residue stretch at 264 to 453 (VCSGGGGSSA…GKKLQKKICV (190 aa)) folds into the VWFA 2 domain. An N-linked (GalNAc...) asparagine glycan is attached at asparagine 344. Positions 467 to 495 (QAKVEGLLQALTRKLEAVSKRLAILENTV) form a coiled coil.

Homotrimer. Part of a complex composed of MATN1 (via VWFA1 domain), type 2 collagens and type 6 collagens. Forms a complex (via covalent bonds) with ACAN; the interaction increases in abundance with increasing age of the organism via an increase in occupancy of MATN1 binding sites. Interacts with COMP. N-glycosylated; reduces binding affinity for type 2 collagens.

Its subcellular location is the secreted. The protein resides in the extracellular space. It is found in the extracellular matrix. In terms of biological role, a major component of the extracellular matrix of non-articular cartilage. Binds to type 2 collagens and forms long concatenated protein networks as part of the extracellular matrix. Required for the network-like organization and bundling of collagen fibrils surrounding chondrocytes in the zones of maturation and hypertrophy. Required for mechanotransduction and adaption to mechanical loading in cartilage chondrocytes, resulting in an increase in expression of the extracellular matrix components ACAN and COL2A1. Acts as a moderator of angiogenesis in response to injury. This Homo sapiens (Human) protein is Matrilin-1.